We begin with the raw amino-acid sequence, 664 residues long: Threonine--tRNA ligase (664 aa).

In terms of domain architecture, TGS spans 1 to 64 (MSELLKITLP…TADAQLALVT (64 aa)). Residues 250–559 (DHRKLGNEMD…LIEHFAGRLP (310 aa)) form a catalytic region. Residues Cys355, His406, and His536 each contribute to the Zn(2+) site.

Belongs to the class-II aminoacyl-tRNA synthetase family. In terms of assembly, homodimer. It depends on Zn(2+) as a cofactor.

It localises to the cytoplasm. The catalysed reaction is tRNA(Thr) + L-threonine + ATP = L-threonyl-tRNA(Thr) + AMP + diphosphate + H(+). Its function is as follows. Catalyzes the attachment of threonine to tRNA(Thr) in a two-step reaction: L-threonine is first activated by ATP to form Thr-AMP and then transferred to the acceptor end of tRNA(Thr). Also edits incorrectly charged L-seryl-tRNA(Thr). The protein is Threonine--tRNA ligase of Novosphingobium aromaticivorans (strain ATCC 700278 / DSM 12444 / CCUG 56034 / CIP 105152 / NBRC 16084 / F199).